The following is a 248-amino-acid chain: 14-3-3 protein zeta (248 aa).

It belongs to the 14-3-3 family. Homodimer.

The protein localises to the cytoplasm. Its function is as follows. Adapter protein implicated in the regulation of a large spectrum of both general and specialized signaling pathways. Binds to a large number of partners, usually by recognition of a phosphoserine or phosphothreonine motif. Binding generally results in the modulation of the activity of the binding partner. The sequence is that of 14-3-3 protein zeta (14-3-3zeta) from Aedes aegypti (Yellowfever mosquito).